A 412-amino-acid polypeptide reads, in one-letter code: Short-chain specific acyl-CoA dehydrogenase, mitochondrial (412 aa).

The N-terminal 24 residues, Met-1–Arg-24, are a transit peptide targeting the mitochondrion. At Thr-27 the chain carries Phosphothreonine. At Lys-51 the chain carries N6-acetyllysine; alternate. Position 51 is an N6-succinyllysine; alternate (Lys-51). Lys-72 is subject to N6-acetyllysine. Lys-129 is subject to N6-acetyllysine; alternate. Lys-129 carries the N6-succinyllysine; alternate modification. FAD-binding positions include Phe-152 to Ser-161 and Trp-185 to Thr-187. Ser-161 is a substrate binding site. Lys-208 is subject to N6-acetyllysine. Lys-262 is modified (N6-acetyllysine; alternate). Lys-262 is modified (N6-succinyllysine; alternate). Asp-269–Arg-272 contributes to the substrate binding site. Residue Lys-292 is modified to N6-acetyllysine. An FAD-binding site is contributed by Arg-297. Lys-306 carries the post-translational modification N6-acetyllysine; alternate. Lys-306 is subject to N6-succinyllysine; alternate. An FAD-binding site is contributed by Gln-365–Gly-369. The active-site Proton acceptor is Glu-392. Thr-394–Glu-396 contributes to the FAD binding site.

The protein belongs to the acyl-CoA dehydrogenase family. As to quaternary structure, homotetramer. It depends on FAD as a cofactor.

The protein resides in the mitochondrion matrix. The enzyme catalyses a short-chain 2,3-saturated fatty acyl-CoA + oxidized [electron-transfer flavoprotein] + H(+) = a short-chain (2E)-enoyl-CoA + reduced [electron-transfer flavoprotein]. It catalyses the reaction butanoyl-CoA + oxidized [electron-transfer flavoprotein] + H(+) = (2E)-butenoyl-CoA + reduced [electron-transfer flavoprotein]. The catalysed reaction is pentanoyl-CoA + oxidized [electron-transfer flavoprotein] + H(+) = (2E)-pentenoyl-CoA + reduced [electron-transfer flavoprotein]. It carries out the reaction hexanoyl-CoA + oxidized [electron-transfer flavoprotein] + H(+) = (2E)-hexenoyl-CoA + reduced [electron-transfer flavoprotein]. It participates in lipid metabolism; mitochondrial fatty acid beta-oxidation. Its function is as follows. Short-chain specific acyl-CoA dehydrogenase is one of the acyl-CoA dehydrogenases that catalyze the first step of mitochondrial fatty acid beta-oxidation, an aerobic process breaking down fatty acids into acetyl-CoA and allowing the production of energy from fats. The first step of fatty acid beta-oxidation consists in the removal of one hydrogen from C-2 and C-3 of the straight-chain fatty acyl-CoA thioester, resulting in the formation of trans-2-enoyl-CoA. Among the different mitochondrial acyl-CoA dehydrogenases, short-chain specific acyl-CoA dehydrogenase acts specifically on acyl-CoAs with saturated 4 to 6 carbons long primary chains. The polypeptide is Short-chain specific acyl-CoA dehydrogenase, mitochondrial (Acads) (Rattus norvegicus (Rat)).